We begin with the raw amino-acid sequence, 167 residues long: Leptin (167 aa).

Positions 1–21 (MRCGPLCRFLWLWPYLSCVEA) are cleaved as a signal peptide. A disulfide bridge connects residues cysteine 117 and cysteine 167.

The protein belongs to the leptin family.

It is found in the secreted. In terms of biological role, key player in the regulation of energy balance and body weight control. Once released into the circulation, has central and peripheral effects by binding LEPR, found in many tissues, which results in the activation of several major signaling pathways. In the hypothalamus, acts as an appetite-regulating factor that induces a decrease in food intake and an increase in energy consumption by inducing anorexinogenic factors and suppressing orexigenic neuropeptides, also regulates bone mass and secretion of hypothalamo-pituitary-adrenal hormones. In the periphery, increases basal metabolism, influences reproductive function, regulates pancreatic beta-cell function and insulin secretion, is pro-angiogenic for endothelial cell and affects innate and adaptive immunity. In the arcuate nucleus of the hypothalamus, activates by depolarization POMC neurons inducing FOS and SOCS3 expression to release anorexigenic peptides and inhibits by hyperpolarization NPY neurons inducing SOCS3 with a consequent reduction on release of orexigenic peptides. In addition to its known satiety inducing effect, has a modulatory role in nutrient absorption. In the intestine, reduces glucose absorption by enterocytes by activating PKC and leading to a sequential activation of p38, PI3K and ERK signaling pathways which exerts an inhibitory effect on glucose absorption. Acts as a growth factor on certain tissues, through the activation of different signaling pathways increases expression of genes involved in cell cycle regulation such as CCND1, via JAK2-STAT3 pathway, or VEGFA, via MAPK1/3 and PI3K-AKT1 pathways. May also play an apoptotic role via JAK2-STAT3 pathway and up-regulation of BIRC5 expression. Pro-angiogenic, has mitogenic activity on vascular endothelial cells and plays a role in matrix remodeling by regulating the expression of matrix metalloproteinases (MMPs) and tissue inhibitors of metalloproteinases (TIMPs). In innate immunity, modulates the activity and function of neutrophils by increasing chemotaxis and the secretion of oxygen radicals. Increases phagocytosis by macrophages and enhances secretion of pro-inflammatory mediators. Increases cytotoxic ability of NK cells. Plays a pro-inflammatory role, in synergy with IL1B, by inducing NOS2 which promotes the production of IL6, IL8 and Prostaglandin E2, through a signaling pathway that involves JAK2, PI3K, MAP2K1/MEK1 and MAPK14/p38. In adaptive immunity, promotes the switch of memory T-cells towards T helper-1 cell immune responses. Increases CD4(+)CD25(-) T-cell proliferation and reduces autophagy during TCR (T-cell receptor) stimulation, through MTOR signaling pathway activation and BCL2 up-regulation. In Canis lupus familiaris (Dog), this protein is Leptin (LEP).